The sequence spans 99 residues: YcgL domain-containing protein HD_1373 (99 aa).

Positions 8–92 (NFCAIYKSMS…PAENLLKQFL (85 aa)) constitute a YcgL domain.

This chain is YcgL domain-containing protein HD_1373, found in Haemophilus ducreyi (strain 35000HP / ATCC 700724).